A 101-amino-acid polypeptide reads, in one-letter code: Large ribosomal subunit protein bL21 (101 aa).

The protein belongs to the bacterial ribosomal protein bL21 family. As to quaternary structure, part of the 50S ribosomal subunit. Contacts protein L20.

Functionally, this protein binds to 23S rRNA in the presence of protein L20. In Corynebacterium glutamicum (strain R), this protein is Large ribosomal subunit protein bL21.